A 107-amino-acid chain; its full sequence is Holo-[acyl-carrier-protein] synthase (107 aa).

Mg(2+) is bound by residues Asp-10 and Glu-54.

It belongs to the P-Pant transferase superfamily. AcpS family. It depends on Mg(2+) as a cofactor.

It localises to the cytoplasm. It catalyses the reaction apo-[ACP] + CoA = holo-[ACP] + adenosine 3',5'-bisphosphate + H(+). Functionally, transfers the 4'-phosphopantetheine moiety from coenzyme A to a Ser of acyl-carrier-protein. The protein is Holo-[acyl-carrier-protein] synthase of Mycoplasma mobile (strain ATCC 43663 / 163K / NCTC 11711) (Mesomycoplasma mobile).